A 320-amino-acid polypeptide reads, in one-letter code: Methionyl-tRNA formyltransferase (320 aa).

114 to 117 contacts (6S)-5,6,7,8-tetrahydrofolate; it reads SLLP.

It belongs to the Fmt family.

It catalyses the reaction L-methionyl-tRNA(fMet) + (6R)-10-formyltetrahydrofolate = N-formyl-L-methionyl-tRNA(fMet) + (6S)-5,6,7,8-tetrahydrofolate + H(+). Attaches a formyl group to the free amino group of methionyl-tRNA(fMet). The formyl group appears to play a dual role in the initiator identity of N-formylmethionyl-tRNA by promoting its recognition by IF2 and preventing the misappropriation of this tRNA by the elongation apparatus. This is Methionyl-tRNA formyltransferase from Acinetobacter baumannii (strain ACICU).